We begin with the raw amino-acid sequence, 430 residues long: Histidinol dehydrogenase (430 aa).

Tyr130, Gln191, and Asn214 together coordinate NAD(+). Ser237, Gln259, and His262 together coordinate substrate. Zn(2+) contacts are provided by Gln259 and His262. Residues Glu327 and His328 each act as proton acceptor in the active site. The substrate site is built by His328, Asp361, Glu415, and His420. Position 361 (Asp361) interacts with Zn(2+). His420 contributes to the Zn(2+) binding site.

It belongs to the histidinol dehydrogenase family. The cofactor is Zn(2+).

It catalyses the reaction L-histidinol + 2 NAD(+) + H2O = L-histidine + 2 NADH + 3 H(+). It participates in amino-acid biosynthesis; L-histidine biosynthesis; L-histidine from 5-phospho-alpha-D-ribose 1-diphosphate: step 9/9. Catalyzes the sequential NAD-dependent oxidations of L-histidinol to L-histidinaldehyde and then to L-histidine. This chain is Histidinol dehydrogenase (hisD), found in Zymomonas mobilis subsp. mobilis (strain ATCC 31821 / ZM4 / CP4).